Consider the following 1402-residue polypeptide: DNA-directed RNA polymerase subunit beta' (1402 aa).

Zn(2+) contacts are provided by Cys71, Cys73, Cys86, and Cys89. Mg(2+) is bound by residues Asp462, Asp464, and Asp466. Residues Cys811, Cys885, Cys892, and Cys895 each coordinate Zn(2+).

It belongs to the RNA polymerase beta' chain family. In terms of assembly, the RNAP catalytic core consists of 2 alpha, 1 beta, 1 beta' and 1 omega subunit. When a sigma factor is associated with the core the holoenzyme is formed, which can initiate transcription. Requires Mg(2+) as cofactor. Zn(2+) is required as a cofactor.

It catalyses the reaction RNA(n) + a ribonucleoside 5'-triphosphate = RNA(n+1) + diphosphate. DNA-dependent RNA polymerase catalyzes the transcription of DNA into RNA using the four ribonucleoside triphosphates as substrates. This chain is DNA-directed RNA polymerase subunit beta', found in Rhizobium etli (strain ATCC 51251 / DSM 11541 / JCM 21823 / NBRC 15573 / CFN 42).